Here is a 375-residue protein sequence, read N- to C-terminus: Glucokinase 1 (375 aa).

25–30 (CDVGGS) serves as a coordination point for ATP.

This sequence belongs to the bacterial glucokinase family. As to quaternary structure, monomer. The N-terminus is blocked.

It carries out the reaction D-glucose + ATP = D-glucose 6-phosphate + ADP + H(+). The protein is Glucokinase 1 (GK1) of Trichomonas vaginalis.